Consider the following 218-residue polypeptide: Adenylate kinase (218 aa).

10 to 15 is an ATP binding site; that stretch reads GAGKGT. The NMP stretch occupies residues 30–59; the sequence is STGDMLRAAVKAGTPLGLEAKAIMDAGGLV. AMP-binding positions include Thr31, Arg36, 57–59, 85–88, and Gln92; these read GLV and GFPR. Residues 122–159 are LID; that stretch reads GRRVHLASGRTYHVTFNPPKAAGKDDVTGEDLVQRDDD. ATP is bound by residues Arg123 and 132–133; that span reads TY. Positions 156 and 167 each coordinate AMP. An ATP-binding site is contributed by Arg203.

Belongs to the adenylate kinase family. In terms of assembly, monomer.

The protein localises to the cytoplasm. The enzyme catalyses AMP + ATP = 2 ADP. It functions in the pathway purine metabolism; AMP biosynthesis via salvage pathway; AMP from ADP: step 1/1. Catalyzes the reversible transfer of the terminal phosphate group between ATP and AMP. Plays an important role in cellular energy homeostasis and in adenine nucleotide metabolism. The sequence is that of Adenylate kinase from Chromobacterium violaceum (strain ATCC 12472 / DSM 30191 / JCM 1249 / CCUG 213 / NBRC 12614 / NCIMB 9131 / NCTC 9757 / MK).